We begin with the raw amino-acid sequence, 260 residues long: Thiazole synthase (260 aa).

K100 (schiff-base intermediate with DXP) is an active-site residue. 1-deoxy-D-xylulose 5-phosphate-binding positions include G161, 187–188 (AG), and 209–210 (NT).

The protein belongs to the ThiG family. In terms of assembly, homotetramer. Forms heterodimers with either ThiH or ThiS.

The protein resides in the cytoplasm. The enzyme catalyses [ThiS sulfur-carrier protein]-C-terminal-Gly-aminoethanethioate + 2-iminoacetate + 1-deoxy-D-xylulose 5-phosphate = [ThiS sulfur-carrier protein]-C-terminal Gly-Gly + 2-[(2R,5Z)-2-carboxy-4-methylthiazol-5(2H)-ylidene]ethyl phosphate + 2 H2O + H(+). The protein operates within cofactor biosynthesis; thiamine diphosphate biosynthesis. In terms of biological role, catalyzes the rearrangement of 1-deoxy-D-xylulose 5-phosphate (DXP) to produce the thiazole phosphate moiety of thiamine. Sulfur is provided by the thiocarboxylate moiety of the carrier protein ThiS. In vitro, sulfur can be provided by H(2)S. This Sorangium cellulosum (strain So ce56) (Polyangium cellulosum (strain So ce56)) protein is Thiazole synthase.